Here is a 420-residue protein sequence, read N- to C-terminus: Acetyl-CoA acetyltransferase A, mitochondrial (420 aa).

The transit peptide at 1 to 33 (MAFCGTRTAARLSHSTRALHNTHRNFASQRTLN) directs the protein to the mitochondrion. The active-site Acyl-thioester intermediate is the C119. CoA-binding positions include Y212, 251–253 (RVD), and K256. A K(+)-binding site is contributed by Y212. The K(+) site is built by A273 and A274. Position 277 (S277) interacts with CoA. V374 contacts K(+). C406 (proton donor/acceptor) is an active-site residue.

Belongs to the thiolase-like superfamily. Thiolase family. As to quaternary structure, homotetramer.

It localises to the mitochondrion. The catalysed reaction is 2 acetyl-CoA = acetoacetyl-CoA + CoA. It catalyses the reaction propanoyl-CoA + acetyl-CoA = 2-methyl-3-oxobutanoyl-CoA + CoA. It participates in lipid metabolism; fatty acid beta-oxidation. In terms of biological role, this is one of the enzymes that catalyzes the last step of the mitochondrial beta-oxidation pathway, an aerobic process breaking down fatty acids into acetyl-CoA. Using free coenzyme A/CoA, catalyzes the thiolytic cleavage of medium- to long-chain 3-oxoacyl-CoAs into acetyl-CoA and a fatty acyl-CoA shortened by two carbon atoms. The activity of the enzyme is reversible and it can also catalyze the condensation of two acetyl-CoA molecules into acetoacetyl-CoA. Thereby, it plays a major role in ketone body metabolism. The polypeptide is Acetyl-CoA acetyltransferase A, mitochondrial (acat1-a) (Xenopus laevis (African clawed frog)).